Reading from the N-terminus, the 481-residue chain is Zinc metalloproteinase/disintegrin (481 aa).

Residues 1 to 20 form the signal peptide; the sequence is MIEVLLVTICLAVFPYQGSS. Residues 21 to 189 constitute a propeptide that is removed on maturation; the sequence is IILESGNVND…KKASQLYLTP (169 aa). E190 carries the post-translational modification Pyrrolidone carboxylic acid (Glu). The Peptidase M12B domain occupies 197 to 392; that stretch reads RYIKLAIVVD…DNPQCILNAP (196 aa). 296–299 is an an L-amino acid tripeptide binding site; sequence RNTI. Cystine bridges form between C308–C387, C349–C371, and C351–C354. H333 contributes to the Zn(2+) binding site. The active site involves E334. Positions 337 and 343 each coordinate Zn(2+). S357 is a binding site for an L-amino acid tripeptide. A propeptide spanning residues 393-410 is cleaved from the precursor; the sequence is LRTDTVSTPVSGNEFLEA. The region spanning 400–481 is the Disintegrin domain; the sequence is TPVSGNEFLE…ADCPRNGLYG (82 aa). Cystine bridges form between C414-C429, C416-C424, C423-C446, C437-C443, C442-C467, and C455-C474. Positions 459 to 461 match the Cell attachment site motif; it reads RGD.

The protein belongs to the venom metalloproteinase (M12B) family. P-II subfamily. P-IIa sub-subfamily. Monomer. The cofactor is Zn(2+). Post-translationally, the N-terminus is blocked. In terms of tissue distribution, expressed by the venom gland.

It is found in the secreted. Its activity is regulated as follows. Inhibited by EDTA and 1,10-phenanthroline. Is also inhibited by endogenous tripeptide inhibitors pyroGlu-Asn-Trp, pyroGlu-Gln-Trp, and pyroGlu-Lys-Trp. Potent fibrinogenolytic protease which cleaves mainly the Aalpha chain of fibrinogen (FGA) and slightly the Bbeta (FGB) and the gamma (FGG) chains. May possess hemorrhagic activity. Compared to other SVMP, the substrate-binding pocket is relatively shallow. Is less susceptible to tripeptide inhibitors than TM-1 (AC U3KRG1) and TM-2. Its function is as follows. Inhibits platelet aggregation induced by ADP, thrombin, platelet-activating factor and collagen. Acts by inhibiting fibrinogen interaction with platelet receptors GPIIb/GPIIIa (ITGA2B/ITGB3). In Protobothrops mucrosquamatus (Taiwan habu), this protein is Zinc metalloproteinase/disintegrin.